The chain runs to 368 residues: 3-dehydroquinate synthase (368 aa).

It belongs to the archaeal-type DHQ synthase family.

It carries out the reaction 2-amino-2,3,7-trideoxy-D-lyxo-hept-6-ulosonate + NAD(+) + H2O = 3-dehydroquinate + NH4(+) + NADH + H(+). Catalyzes the oxidative deamination and cyclization of 2-amino-3,7-dideoxy-D-threo-hept-6-ulosonic acid (ADH) to yield 3-dehydroquinate (DHQ), which is fed into the canonical shikimic pathway of aromatic amino acid biosynthesis. The chain is 3-dehydroquinate synthase from Methanobrevibacter smithii (strain ATCC 35061 / DSM 861 / OCM 144 / PS).